A 145-amino-acid polypeptide reads, in one-letter code: uncharacterized protein (145 aa).

This is an uncharacterized protein from Sinorhizobium fredii (strain NBRC 101917 / NGR234).